Here is a 433-residue protein sequence, read N- to C-terminus: Serine--tRNA ligase (433 aa).

L-serine is bound at residue 235–237 (TSE). Residue 266-268 (RSE) participates in ATP binding. An L-serine-binding site is contributed by Glu-289. 353-356 (EISS) provides a ligand contact to ATP. Ser-388 is a binding site for L-serine.

The protein belongs to the class-II aminoacyl-tRNA synthetase family. Type-1 seryl-tRNA synthetase subfamily. Homodimer. The tRNA molecule binds across the dimer.

It localises to the cytoplasm. It carries out the reaction tRNA(Ser) + L-serine + ATP = L-seryl-tRNA(Ser) + AMP + diphosphate + H(+). The catalysed reaction is tRNA(Sec) + L-serine + ATP = L-seryl-tRNA(Sec) + AMP + diphosphate + H(+). The protein operates within aminoacyl-tRNA biosynthesis; selenocysteinyl-tRNA(Sec) biosynthesis; L-seryl-tRNA(Sec) from L-serine and tRNA(Sec): step 1/1. Catalyzes the attachment of serine to tRNA(Ser). Is also able to aminoacylate tRNA(Sec) with serine, to form the misacylated tRNA L-seryl-tRNA(Sec), which will be further converted into selenocysteinyl-tRNA(Sec). This Burkholderia pseudomallei (strain 1106a) protein is Serine--tRNA ligase.